A 778-amino-acid polypeptide reads, in one-letter code: Aerobic respiration control sensor protein ArcB (778 aa).

Residues 1–25 are Cytoplasmic-facing; sequence MKQIRLLAQYYVDLMMKLGLVRFSM. The chain crosses the membrane as a helical span at residues 26–46; that stretch reads LLALALVVLAIVVQMAVTMVL. At 47-57 the chain is on the periplasmic side; it reads HGQVESIDVIR. A helical membrane pass occupies residues 58 to 78; the sequence is SIFFGLLITPWAVYFLSVVVE. Residues 79 to 778 lie on the Cytoplasmic side of the membrane; it reads QLEESRQRLS…KAWVAKATKK (700 aa). The 71-residue stretch at 153–223 folds into the PAS domain; the sequence is QSSFLRSFLD…ETDEKVFRHN (71 aa). Residues 226-278 enclose the PAC domain; sequence LTYEQWLDYPDGRKACFEIRKVPYYDRVGKRHGLMGFGRDITERKRYQDALER. The Histidine kinase domain occupies 289-507; sequence TISHELRTPL…TFTLTIHAPS (219 aa). At H292 the chain carries Phosphohistidine; by autocatalysis. In terms of domain architecture, Response regulatory spans 527 to 643; that stretch reads NVLLVEDIEL…ALTAMIKKFW (117 aa). Residue D576 is modified to 4-aspartylphosphate. The HPt domain maps to 678-771; the sequence is GPKLITDGLA…RHDVEVLKAW (94 aa). Residue H717 is modified to Phosphohistidine.

In terms of processing, activation requires a sequential transfer of a phosphate group from a His in the primary transmitter domain, to an Asp in the receiver domain and to a His in the secondary transmitter domain.

Its subcellular location is the cell inner membrane. It catalyses the reaction ATP + protein L-histidine = ADP + protein N-phospho-L-histidine.. Its function is as follows. Member of the two-component regulatory system ArcB/ArcA. Sensor-regulator protein for anaerobic repression of the arc modulon. Activates ArcA via a four-step phosphorelay. ArcB can also dephosphorylate ArcA by a reverse phosphorelay involving His-717 and Asp-576. This is Aerobic respiration control sensor protein ArcB (arcB) from Escherichia coli (strain K12).